The sequence spans 278 residues: Sulfur carrier protein FdhD (278 aa).

Cys121 serves as the catalytic Cysteine persulfide intermediate. 260 to 265 (FCKPGR) contacts Mo-bis(molybdopterin guanine dinucleotide).

Belongs to the FdhD family.

The protein localises to the cytoplasm. Required for formate dehydrogenase (FDH) activity. Acts as a sulfur carrier protein that transfers sulfur from IscS to the molybdenum cofactor prior to its insertion into FDH. In Escherichia coli O127:H6 (strain E2348/69 / EPEC), this protein is Sulfur carrier protein FdhD.